A 148-amino-acid polypeptide reads, in one-letter code: Protein H2A.6 (148 aa).

The disordered stretch occupies residues 120-148 (GAAEKESTKSPKKKAATKSPKKKTAATKE). 2 short sequence motifs (SPKK motif) span residues 129 to 132 (SPKK) and 138 to 141 (SPKK). Residues 129–148 (SPKKKAATKSPKKKTAATKE) are compositionally biased toward basic residues.

Belongs to the histone H2A family. The nucleosome is a histone octamer containing two molecules each of H2A, H2B, H3 and H4 assembled in one H3-H4 heterotetramer and two H2A-H2B heterodimers. The octamer wraps approximately 147 bp of DNA. In terms of tissue distribution, abundant in meristematic tissues.

The protein resides in the nucleus. It localises to the chromosome. Functionally, core component of nucleosome. Nucleosomes wrap and compact DNA into chromatin, limiting DNA accessibility to the cellular machineries which require DNA as a template. Histones thereby play a central role in transcription regulation, DNA repair, DNA replication and chromosomal stability. DNA accessibility is regulated via a complex set of post-translational modifications of histones, also called histone code, and nucleosome remodeling. In Triticum aestivum (Wheat), this protein is Protein H2A.6 (H2A-3).